Consider the following 2349-residue polypeptide: Reducing polyketide synthase AFT16-1 (2349 aa).

A compositionally biased stretch (basic and acidic residues) spans 1–14; it reads MNGKSRDNGHDGKR. Disordered regions lie at residues 1–21 and 37–80; these read MNGKSRDNGHDGKRQPVVPAE and TNPS…TSNS. In terms of domain architecture, Ketosynthase family 3 (KS3) spans 20 to 462; the sequence is AEPIAIVGTA…GTNAHTILES (443 aa). Catalysis depends on for beta-ketoacyl synthase activity residues cysteine 194, histidine 333, and histidine 382. Positions 578-888 are malonyl-CoA:ACP transacylase (MAT) domain; the sequence is VFTGQGAQWP…LLYKGVLERF (311 aa). The tract at residues 958-1092 is N-terminal hotdog fold; the sequence is HPLLGFRSVD…GDILLSHFAK (135 aa). The interval 958–1263 is dehydratase (DH) domain; sequence HPLLGFRSVD…QVEGLKFSCM (306 aa). The PKS/mFAS DH domain occupies 958 to 1269; that stretch reads HPLLGFRSVD…FSCMYPAQET (312 aa). The active-site Proton acceptor; for dehydratase activity is the histidine 990. Residues 1111–1269 are C-terminal hotdog fold; the sequence is MSSVEPSLFY…FSCMYPAQET (159 aa). The Proton donor; for dehydratase activity role is filled by aspartate 1170. The ketoreductase (KR) domain stretch occupies residues 1976–2164; that stretch reads SPNKTYLLVG…VVGVGYVARA (189 aa). The Carrier domain occupies 2273-2347; the sequence is EILSGSLKQK…GLCLEAIGQW (75 aa). Serine 2307 carries the post-translational modification O-(pantetheine 4'-phosphoryl)serine.

It participates in mycotoxin biosynthesis. Functionally, reducing polyketide synthase; part of the gene clusters that mediate the biosynthesis of the host-selective toxins (HSTs) AF-toxins responsible for Alternaria black spot of strawberry disease by the strawberry pathotype. AF-toxin I and III are valine derivatives of 2,3-dyhydroxy-isovaleric acid and 2-hydroxy-isovaleric acid respectively, while AF II is an isoleucine derivative of 2-hydroxy-valeric acid. These derivatives are bound to a 9,10-epoxy-8-hydroxy-9-methyl-decatrienoic acid (EDA) moiety. On cellular level, AF-toxins affect plasma membrane of susceptible cells and cause a sudden increase in loss of K(+) after a few minutes of toxin treatment. The aldo-keto reductase AFTS1 catalyzes the conversion of 2-keto-isovaleric acid (2-KIV) to 2-hydroxy-isovaleric acid (2-HIV) by reduction of its ketone to an alcohol. The acyl-CoA ligase AFT1, the hydrolase AFT2 and the enoyl-CoA hydratases AFT3 and AFT6, but also the polyketide synthase AFT9, the acyl-CoA dehydrogenase AFT10, the cytochrome P450 monooxygenase AFT11 and the oxidoreductase AFT12 are all involved in the biosynthesis of the AK-, AF- and ACT-toxin common EDA structural moiety. The exact function of each enzyme, and of additional enzymes identified within the AF-toxin clusters have still to be determined. The polypeptide is Reducing polyketide synthase AFT16-1 (Alternaria alternata (Alternaria rot fungus)).